The sequence spans 78 residues: Large ribosomal subunit protein bL28 (78 aa).

The protein belongs to the bacterial ribosomal protein bL28 family.

In Haemophilus influenzae (strain 86-028NP), this protein is Large ribosomal subunit protein bL28.